The primary structure comprises 152 residues: Endoribonuclease YbeY (152 aa).

Positions 113, 117, and 123 each coordinate Zn(2+).

It belongs to the endoribonuclease YbeY family. It depends on Zn(2+) as a cofactor.

The protein localises to the cytoplasm. Its function is as follows. Single strand-specific metallo-endoribonuclease involved in late-stage 70S ribosome quality control and in maturation of the 3' terminus of the 16S rRNA. This is Endoribonuclease YbeY from Acidovorax ebreus (strain TPSY) (Diaphorobacter sp. (strain TPSY)).